The sequence spans 35 residues: Photosystem II reaction center protein T (35 aa).

Residues 3–23 (ALVYTFLLISTLGIIFFAIFF) form a helical membrane-spanning segment.

Belongs to the PsbT family. In terms of assembly, PSII is composed of 1 copy each of membrane proteins PsbA, PsbB, PsbC, PsbD, PsbE, PsbF, PsbH, PsbI, PsbJ, PsbK, PsbL, PsbM, PsbT, PsbY, PsbZ, Psb30/Ycf12, at least 3 peripheral proteins of the oxygen-evolving complex and a large number of cofactors. It forms dimeric complexes.

The protein resides in the plastid. It localises to the chloroplast thylakoid membrane. Functionally, found at the monomer-monomer interface of the photosystem II (PS II) dimer, plays a role in assembly and dimerization of PSII. PSII is a light-driven water plastoquinone oxidoreductase, using light energy to abstract electrons from H(2)O, generating a proton gradient subsequently used for ATP formation. This chain is Photosystem II reaction center protein T, found in Aristolochia macrophylla (Dutchman's pipe vine).